The following is a 219-amino-acid chain: Thymidylate kinase (219 aa).

An ATP-binding site is contributed by 10–17; it reads GLEGAGKT.

The protein belongs to the thymidylate kinase family.

The catalysed reaction is dTMP + ATP = dTDP + ADP. Functionally, phosphorylation of dTMP to form dTDP in both de novo and salvage pathways of dTTP synthesis. This is Thymidylate kinase from Pectobacterium carotovorum subsp. carotovorum (strain PC1).